The chain runs to 71 residues: ATP synthase F(0) complex subunit e, mitochondrial (71 aa).

N6-acetyllysine is present on K34. At S68 the chain carries Phosphoserine.

This sequence belongs to the ATPase e subunit family. As to quaternary structure, component of the ATP synthase complex composed at least of ATP5F1A/subunit alpha, ATP5F1B/subunit beta, ATP5MC1/subunit c (homooctomer), MT-ATP6/subunit a, MT-ATP8/subunit 8, ATP5ME/subunit e, ATP5MF/subunit f, ATP5MG/subunit g, ATP5MK/subunit k, ATP5MJ/subunit j, ATP5F1C/subunit gamma, ATP5F1D/subunit delta, ATP5F1E/subunit epsilon, ATP5PF/subunit F6, ATP5PB/subunit b, ATP5PD/subunit d, ATP5PO/subunit OSCP. ATP synthase complex consists of a soluble F(1) head domain (subunits alpha(3) and beta(3)) - the catalytic core - and a membrane F(0) domain - the membrane proton channel (subunits c, a, 8, e, f, g, k and j). These two domains are linked by a central stalk (subunits gamma, delta, and epsilon) rotating inside the F1 region and a stationary peripheral stalk (subunits F6, b, d, and OSCP).

The protein localises to the mitochondrion. Its subcellular location is the mitochondrion inner membrane. Functionally, subunit e, of the mitochondrial membrane ATP synthase complex (F(1)F(0) ATP synthase or Complex V) that produces ATP from ADP in the presence of a proton gradient across the membrane which is generated by electron transport complexes of the respiratory chain. ATP synthase complex consist of a soluble F(1) head domain - the catalytic core - and a membrane F(1) domain - the membrane proton channel. These two domains are linked by a central stalk rotating inside the F(1) region and a stationary peripheral stalk. During catalysis, ATP synthesis in the catalytic domain of F(1) is coupled via a rotary mechanism of the central stalk subunits to proton translocation. In vivo, can only synthesize ATP although its ATP hydrolase activity can be activated artificially in vitro. Part of the complex F(0) domain. This is ATP synthase F(0) complex subunit e, mitochondrial from Sus scrofa (Pig).